Reading from the N-terminus, the 239-residue chain is MNNDVISPEFDENGRPLRRIRSFVRRQGRLTKGQQHALDHYWPVMGVEYRAEPLDLVALFGRDAPVTLEIGFGMGSSLVEMAKTNPQQNFLGIEVHSPGVGACLSAAHEEGVENLRVMCHDAVEVLEKMIPDGSLHMVQLFFPDPWHKARHNKRRIVQVPFAQLVLRKLQPGGVFHMATDWEPYAEHMLEVMSSVEGYENLSPTQDYVPRPASRPVTKFEQRGHRLGHGVWDLMFGRVK.

S-adenosyl-L-methionine-binding residues include glutamate 69, glutamate 94, aspartate 121, and aspartate 144. Residue aspartate 144 is part of the active site. Lysine 148 contributes to the substrate binding site. The interaction with RNA stretch occupies residues 150-155 (RHNKRR). Substrate is bound by residues aspartate 180 and 217 to 220 (TKFE).

The protein belongs to the class I-like SAM-binding methyltransferase superfamily. TrmB family. In terms of assembly, monomer.

It carries out the reaction guanosine(46) in tRNA + S-adenosyl-L-methionine = N(7)-methylguanosine(46) in tRNA + S-adenosyl-L-homocysteine. It participates in tRNA modification; N(7)-methylguanine-tRNA biosynthesis. Catalyzes the formation of N(7)-methylguanine at position 46 (m7G46) in tRNA. This is tRNA (guanine-N(7)-)-methyltransferase from Cronobacter sakazakii (strain ATCC BAA-894) (Enterobacter sakazakii).